The sequence spans 415 residues: Serine hydroxymethyltransferase (415 aa).

(6S)-5,6,7,8-tetrahydrofolate-binding positions include leucine 121 and 125–127; that span reads GHL. Lysine 230 bears the N6-(pyridoxal phosphate)lysine mark.

The protein belongs to the SHMT family. As to quaternary structure, homodimer. Pyridoxal 5'-phosphate serves as cofactor.

Its subcellular location is the cytoplasm. It carries out the reaction (6R)-5,10-methylene-5,6,7,8-tetrahydrofolate + glycine + H2O = (6S)-5,6,7,8-tetrahydrofolate + L-serine. The protein operates within one-carbon metabolism; tetrahydrofolate interconversion. It functions in the pathway amino-acid biosynthesis; glycine biosynthesis; glycine from L-serine: step 1/1. In terms of biological role, catalyzes the reversible interconversion of serine and glycine with tetrahydrofolate (THF) serving as the one-carbon carrier. This reaction serves as the major source of one-carbon groups required for the biosynthesis of purines, thymidylate, methionine, and other important biomolecules. Also exhibits THF-independent aldolase activity toward beta-hydroxyamino acids, producing glycine and aldehydes, via a retro-aldol mechanism. In Syntrophomonas wolfei subsp. wolfei (strain DSM 2245B / Goettingen), this protein is Serine hydroxymethyltransferase.